Reading from the N-terminus, the 443-residue chain is MEQKPEVDYSEKFAELQKSLNNLNTIDIDANLEKLLIFEKQVRQASDTSTNTKVLIYIADLLFRAGDFQGLNEQLVSLFKKHGQLKQSMTSLVQHVMTYLPGIDDLKTKINLIETLRTITDGKIYVEVERARLTQLLSQIKEEQGDIKSAQEILCNEPVETYGSFDLKEKVAFILDQVRLFLLRSDYYMASTYTKKINVKFFEKEDVQSLKLKYYEQKIRIGLHDDAYLDVCKYYRAVYDTAVVQEDPEKWKEILENVVCFALLTPYDNEQADLLHRINADHKLNSLPLLQQLVKCFIVNELMRWPKIAEIYGSALRSNPVFAENDEKGEKRWSELRKRVIEHNIRVVANYYSRIHCSRLGVLLDMSPSETEQFLCDLIAKHHFYAKIDRPAQVISFKKSQNVQEQLNEWGSNITELLGKLEKVRQLIIKEEMMNSIQQAVAK.

The residue at position 209 (Ser-209) is a Phosphoserine. The PCI domain maps to 230 to 402 (DVCKYYRAVY…QVISFKKSQN (173 aa)).

Belongs to the proteasome subunit p55 family.

Its subcellular location is the nucleus. Acts as a regulatory subunit of the 26S proteasome which is involved in the ATP-dependent degradation of ubiquitinated proteins. Required for proper proteasome assembly. This Schizosaccharomyces pombe (strain 972 / ATCC 24843) (Fission yeast) protein is 26S proteasome regulatory subunit rpn501 (rpn501).